The chain runs to 594 residues: KIF-binding protein (594 aa).

The protein belongs to the KIF-binding protein family.

Its subcellular location is the cytoplasm. The protein resides in the cytoskeleton. Functionally, activator of KIF1B plus-end-directed microtubule motor activity. Required for organization of axonal microtubules, and axonal outgrowth and maintenance during peripheral and central nervous system development. This is KIF-binding protein (Kifbp) from Gallus gallus (Chicken).